The following is a 314-amino-acid chain: Ribosomal protein uL3 glutamine methyltransferase (314 aa).

Belongs to the protein N5-glutamine methyltransferase family. PrmB subfamily.

The enzyme catalyses L-glutaminyl-[ribosomal protein uL3] + S-adenosyl-L-methionine = N(5)-methyl-L-glutaminyl-[ribosomal protein uL3] + S-adenosyl-L-homocysteine + H(+). In terms of biological role, methylates large ribosomal subunit protein uL3 on a specific glutamine residue. The protein is Ribosomal protein uL3 glutamine methyltransferase of Francisella tularensis subsp. tularensis (strain SCHU S4 / Schu 4).